The following is a 97-amino-acid chain: HssA/B-like protein 44 (97 aa).

Disordered stretches follow at residues 1–22 (MTLFSSISSISSSISSSKSSIA) and 62–97 (ASTSSGGRGGRPGRGHGGPHGHGRGGSGSGSSCGCN). Positions 72 to 84 (RPGRGHGGPHGHG) are enriched in basic residues. The segment covering 85-97 (RGGSGSGSSCGCN) has biased composition (gly residues).

Belongs to the hssA/B family.

The polypeptide is HssA/B-like protein 44 (hssl44) (Dictyostelium discoideum (Social amoeba)).